The sequence spans 453 residues: Gastrin/cholecystokinin type B receptor (453 aa).

The Extracellular segment spans residues 1-57; the sequence is MDLLKLNRSLQGPGPGSGSSLCRPGVSLLNSSSAGNLSCETPRIRGTGTRELELTIR. 3 N-linked (GlcNAc...) asparagine glycosylation sites follow: Asn-7, Asn-30, and Asn-36. Residues 58 to 79 form a helical membrane-spanning segment; it reads ITLYAVIFLMSVGGNVLIIVVL. Over 80 to 87 the chain is Cytoplasmic; sequence GLSRRLRT. Residues 88–109 traverse the membrane as a helical segment; that stretch reads VTNAFLLSLAVSDLLLAVACMP. Residues 110–131 are Extracellular-facing; sequence FTLLPNLMGTFIFGTVICKAVS. A disulfide bridge connects residues Cys-127 and Cys-205. Residues 132–150 traverse the membrane as a helical segment; it reads YLMGVSVSVSTLNLAAIAL. Residues 151-170 are Cytoplasmic-facing; sequence ERYSAICRPLQARVWQTRSH. A helical transmembrane segment spans residues 171-189; that stretch reads AARVILATWLLSGLLMVPY. Over 190 to 219 the chain is Extracellular; the sequence is PVYTVVQPVGPRILQCMHLWPSERVQQMWS. The chain crosses the membrane as a helical span at residues 220–242; sequence VLLLILLFFIPGVVMAVAYGLIS. Topologically, residues 243–339 are cytoplasmic; the sequence is RELYLGLRFD…KLLAKKRVVR (97 aa). Residues 257-276 form a disordered region; sequence SETQSRVRNQGGLPGGAAAP. A helical membrane pass occupies residues 340–361; that stretch reads MLLVIVLLFFVCWLPVYSANTW. Over 362-379 the chain is Extracellular; sequence RAFDGPGARRALAGAPIS. A helical transmembrane segment spans residues 380-400; sequence FIHLLSYTSACANPLVYCFMH. Topologically, residues 401 to 453 are cytoplasmic; the sequence is RRFRQACLDTCARCCPRPPRARPRPLPDEDPPTPSIASLSRLSYTTISTLGPG. A lipid anchor (S-palmitoyl cysteine) is attached at Cys-414.

Belongs to the G-protein coupled receptor 1 family.

Its subcellular location is the cell membrane. Receptor for gastrin and cholecystokinin. The CCK-B receptors occur throughout the central nervous system where they modulate anxiety, analgesia, arousal, and neuroleptic activity. This receptor mediates its action by association with G proteins that activate a phosphatidylinositol-calcium second messenger system. This Mus musculus (Mouse) protein is Gastrin/cholecystokinin type B receptor (Cckbr).